A 100-amino-acid polypeptide reads, in one-letter code: Vesicle-associated membrane protein 8 (100 aa).

Met-1 is subject to N-acetylmethionine. The Cytoplasmic portion of the chain corresponds to 1-75; the sequence is MEEASEGGGN…ARKFWWKNVK (75 aa). A phosphoserine mark is found at Ser-5 and Ser-18. A v-SNARE coiled-coil homology domain is found at 12-72; the sequence is RVRNLQSEVE…QKVARKFWWK (61 aa). A phosphothreonine mark is found at Thr-28, Thr-48, and Thr-54. A Phosphoserine modification is found at Ser-55. Residues Lys-64 and Lys-68 are each lipidated ((Microbial infection) N6-stearoyl lysine). Residues 76-96 form a helical; Anchor for type IV membrane protein membrane-spanning segment; it reads MIVLICVIVFIIILFIVLFAT. Topologically, residues 97-100 are vesicular; sequence GAFS.

This sequence belongs to the synaptobrevin family. Forms a SNARE complex composed of VAMP8, SNAP29 and STX17 involved in fusion of autophagosome with lysosome. Found in a number of SNARE complexes with NAPA, SNAP23, SNAP25, STX1A, STX4, STX7, STX8 and VTI1B. Interacts with PICALM. SNARE complex formation and binding by PICALM are mutually exclusive processes for VAMP8. Interacts with SBF2/MTMR13. Interacts with RAB21 (in GTP-bound form) in response to starvation; the interaction probably regulates VAMP8 endolysosomal trafficking. Interacts with STX17; this interaction is increased in the absence of TMEM39A. Interacts with TRIM6. In terms of assembly, (Microbial infection) The interaction with STX17 is decreased in presence of SARS coronavirus-2/SARS-CoV-2 ORF3A protein. (Microbial infection) Stearoylated By S.flexneri N-epsilon-fatty acyltransferase IcsB, thereby disrupting the host actin cytoskeleton. As to expression, platelets.

The protein resides in the lysosome membrane. Its subcellular location is the early endosome membrane. It is found in the late endosome membrane. The protein localises to the cell membrane. It localises to the zymogen granule membrane. Functionally, SNAREs, soluble N-ethylmaleimide-sensitive factor-attachment protein receptors, are essential proteins for fusion of cellular membranes. SNAREs localized on opposing membranes assemble to form a trans-SNARE complex, an extended, parallel four alpha-helical bundle that drives membrane fusion. VAMP8 is a SNARE involved in autophagy through the direct control of autophagosome membrane fusion with the lysososome membrane via its interaction with the STX17-SNAP29 binary t-SNARE complex. Also required for dense-granule secretion in platelets. Also plays a role in regulated enzyme secretion in pancreatic acinar cells. Involved in the abscission of the midbody during cell division, which leads to completely separate daughter cells. Involved in the homotypic fusion of early and late endosomes. Also participates in the activation of type I interferon antiviral response through a TRIM6-dependent mechanism. This Homo sapiens (Human) protein is Vesicle-associated membrane protein 8.